We begin with the raw amino-acid sequence, 219 residues long: Ribose-5-phosphate isomerase A (219 aa).

Substrate contacts are provided by residues 28 to 31 (TGST), 81 to 84 (DSAD), and 94 to 97 (KGGG). The active-site Proton acceptor is Glu-103. Lys-121 is a binding site for substrate.

This sequence belongs to the ribose 5-phosphate isomerase family. As to quaternary structure, homodimer.

It catalyses the reaction aldehydo-D-ribose 5-phosphate = D-ribulose 5-phosphate. The protein operates within carbohydrate degradation; pentose phosphate pathway; D-ribose 5-phosphate from D-ribulose 5-phosphate (non-oxidative stage): step 1/1. Its function is as follows. Catalyzes the reversible conversion of ribose-5-phosphate to ribulose 5-phosphate. The polypeptide is Ribose-5-phosphate isomerase A (Buchnera aphidicola subsp. Schizaphis graminum (strain Sg)).